A 309-amino-acid polypeptide reads, in one-letter code: S-antigen protein (309 aa).

The first 23 residues, 1–23, serve as a signal peptide directing secretion; it reads MNRILSVSFYLFFLYLYIYKTYG. The disordered stretch occupies residues 52-309; that stretch reads GKGNKYEDLQ…KSIMNMLILM (258 aa). Acidic residues predominate over residues 60-86; it reads LQEEGEGENDDEEHSNSEESDNDEENE. Over residues 93–259 the composition is skewed to basic and acidic residues; that stretch reads EAPKSDEAEA…DEAEARKSEA (167 aa). The 20 X 8 AA approximate tandem repeats of A-[RL]-K-S-D-E-A-E stretch occupies residues 97-256; the sequence is SDEAEALKSD…RKSDEAEARK (160 aa). Repeat copies occupy residues 257–271 and 272–286. Residues 257–286 form a 2 X 15 AA tandem repeats of S-E-A-G-T-E-G-P-K-G-T-G-G-P-G region; the sequence is SEAGTEGPKGTGGPGSEAGTEGPKGTGGPG. The span at 263-289 shows a compositional bias: gly residues; it reads GPKGTGGPGSEAGTEGPKGTGGPGSGG.

The protein localises to the parasitophorous vacuole. Its function is as follows. S antigens are soluble heat-stable proteins present in the sera of some infected individuals. This Plasmodium falciparum (isolate NF7 / Ghana) protein is S-antigen protein.